A 715-amino-acid chain; its full sequence is Zinc finger protein 544 (715 aa).

Residues 14 to 85 (VCFEDVAMAF…EQEAPRDWKA (72 aa)) enclose the KRAB domain. Glycyl lysine isopeptide (Lys-Gly) (interchain with G-Cter in SUMO2) cross-links involve residues Lys273 and Lys289. A C2H2-type 1; atypical zinc finger spans residues 354 to 374 (SVCNQCGKSFSCCKLIHQRTH). C2H2-type zinc fingers lie at residues 380 to 402 (FECT…QRTH), 408 to 430 (YECD…QRIH), 436 to 458 (YQCI…QRIH), 464 to 486 (YECT…KRTH), 492 to 514 (FKCT…QRTH), 520 to 542 (YECN…QRIH), 548 to 570 (YQCI…QRIH), 576 to 598 (YDCT…KRTH), 604 to 626 (YECN…LQIH), 632 to 654 (YKCN…QRTH), 660 to 682 (FECS…HRIH), and 688 to 710 (YECS…RRTH). Residue Lys534 forms a Glycyl lysine isopeptide (Lys-Gly) (interchain with G-Cter in SUMO2) linkage.

This sequence belongs to the krueppel C2H2-type zinc-finger protein family.

It localises to the nucleus. In terms of biological role, may be involved in transcriptional regulation. This Homo sapiens (Human) protein is Zinc finger protein 544 (ZNF544).